The chain runs to 327 residues: GMP reductase (327 aa).

Cysteine 176 acts as the Thioimidate intermediate in catalysis. Position 205–228 (205–228) interacts with NADP(+); the sequence is IIADGGIRTHGDIAKSIRFGASMV.

This sequence belongs to the IMPDH/GMPR family. GuaC type 2 subfamily.

It catalyses the reaction IMP + NH4(+) + NADP(+) = GMP + NADPH + 2 H(+). In terms of biological role, catalyzes the irreversible NADPH-dependent deamination of GMP to IMP. It functions in the conversion of nucleobase, nucleoside and nucleotide derivatives of G to A nucleotides, and in maintaining the intracellular balance of A and G nucleotides. In Streptococcus pyogenes serotype M28 (strain MGAS6180), this protein is GMP reductase.